Consider the following 141-residue polypeptide: MINAKKLMKMAKKWQQRAALHRKRISFQRSSVFTSSSSTVEKGCFVVYTADKIRFAFPISYLSNSVVQELLKISEEDFGLPTEGPITLPFDSAFLEYLVKLIQRRMDEDTEKALLLSISSARCSFQPQEQQCSTTQQLLVF.

This sequence belongs to the ARG7 family. In terms of tissue distribution, expressed in hypocotyls, cotyledons, petioles, young rosette leaves, apical portion of inflorescence stems, stamen filaments and petals.

It is found in the cell membrane. Its function is as follows. May promote auxin-stimulated organ elongation, such as hypocotyls, stamen filaments and petals. This is Auxin-responsive protein SAUR63 from Arabidopsis thaliana (Mouse-ear cress).